A 32-amino-acid polypeptide reads, in one-letter code: Natriuretic peptide Coa_NP2 (32 aa).

Cysteine 8 and cysteine 24 are joined by a disulfide.

This sequence belongs to the natriuretic peptide family. Snake NP subfamily. Expressed by the venom gland.

The protein localises to the secreted. Its function is as follows. Snake venom natriuretic peptide that exhibits hypotensive and vasorelaxant effects. Produces a dose-dependent hypotension in rats, followed by significant increases in concentrations of markers of nitric oxide (NO) formation measured in the plasma and vasorelaxation in a thoracic aortic ring bath. The peptide may exert its hypotensive action, at least in part, through stimulation of NO production. The vasorelaxant effect is endothelium-dependent and does not appear to be mediated by the natriuretic peptide receptor-A, as its action is not modified by isatin (a potent NPR1 antagonist). May act by activating the natriuretic peptide receptor-B (NPR2). The protein is Natriuretic peptide Coa_NP2 of Crotalus lutosus abyssus (Grand Canyon rattlesnake).